Consider the following 288-residue polypeptide: MAASPYSIFAVQLLLLASWMLSSSSSNFNQDFNIAWGGGRARILNNGELVTLSLDKASGSGFRSKNLYLFGKIDMQLKLVPGNSAGTVTTYYLSSEGSVRDEIDFEFLGNLTGEPYTLHTNVYSHGKGEREQQFRLWFDPAADFHTYSILWNSKTIVFYVDQTPVREFKNMESIGVPYLRQPMRLFSSIWNADEWATRGGLIKTDWTQAPFTTSYRNFRADNACVWAAKASSCGLAAGGNAWLSVELDAKSRGRLRWVRRNQMIYDYCVDGKRFPRGVPPECKLNLHI.

The N-terminal stretch at 1–25 (MAASPYSIFAVQLLLLASWMLSSSS) is a signal peptide. A GH16 domain is found at 26–215 (SNFNQDFNIA…WTQAPFTTSY (190 aa)). Glu102 (nucleophile) is an active-site residue. Glu106 serves as the catalytic Proton donor. Residue Glu106 coordinates xyloglucan. N-linked (GlcNAc...) asparagine glycosylation is present at Asn110. Xyloglucan-binding positions include 119–121 (HTN), 129–131 (ERE), 194–195 (EW), and Gly199. 2 disulfide bridges follow: Cys224–Cys233 and Cys268–Cys282. Arg273 serves as a coordination point for xyloglucan.

It belongs to the glycosyl hydrolase 16 family. XTH group 2 subfamily. Post-translationally, contains at least one intrachain disulfide bond essential for its enzymatic activity. As to expression, highly expressed in mature fruits. Very low expression in leaves, flowers, calyces and stems.

Its subcellular location is the secreted. The protein localises to the cell wall. It is found in the extracellular space. It localises to the apoplast. The enzyme catalyses breaks a beta-(1-&gt;4) bond in the backbone of a xyloglucan and transfers the xyloglucanyl segment on to O-4 of the non-reducing terminal glucose residue of an acceptor, which can be a xyloglucan or an oligosaccharide of xyloglucan.. In terms of biological role, catalyzes xyloglucan endotransglycosylation (XET). Cleaves and religates xyloglucan polymers. Does not catalyze xyloglucan endohydrolysis (XEH). Overexpression in Arabidopsis transgenic plants causes accelerated dark-induced leaf senescence and higher lipid peroxidation of the leaf cells. Overexpression in transgenic tomato plants promotes fruit ripening and softening. Probably involved in cell wall restructuring during postharvest fruit softening. In Diospyros kaki (Kaki persimmon), this protein is Xyloglucan endotransglucosylase protein 8.